A 285-amino-acid polypeptide reads, in one-letter code: MQTSLFEFANVLITAVKEASYSISKFKEEVEIKYKSDGSEVTQVDTQSQQIIFSIIKNKYPTINIIGEEDVENGIPDNQLPTITQLSFGSLENKIININDIIIYVDPLDGTDCYTHKQYDSVCVLVGVTYKGKPMIGIVSKPFYNNEITFAIENYISSISLQPLNDKIIFVCSKKNDIQHLIKSFPDPYEVKYKGGSGAKMMAIIHQEADIYYHPLIQSCTWDTLAAQVILEAQGGIVCDIYGNPLCYPSSKKESMRHKKGVLCLSPRAKKYLPYMLSISKTILL.

Mg(2+) contacts are provided by glutamate 68, aspartate 106, leucine 108, and aspartate 109. Aspartate 109, glycine 110, threonine 111, serine 173, glycine 195, serine 197, and lysine 200 together coordinate 1D-myo-inositol 1,4-bisphosphate. Mg(2+) is bound at residue aspartate 223.

It belongs to the inositol monophosphatase superfamily. In terms of assembly, monomer. It depends on Mg(2+) as a cofactor.

Its subcellular location is the cytoplasm. The enzyme catalyses 1D-myo-inositol 1,4-bisphosphate + H2O = 1D-myo-inositol 4-phosphate + phosphate. The catalysed reaction is adenosine 3',5'-bisphosphate + H2O = AMP + phosphate. Partially inhibited by Li(2+). In terms of biological role, catalyzes the hydrolysis of the 1-position phosphate from inositol 1,4-bisphosphate. Is also able to convert 3'(2')-phosphoadenosine 5'-phosphate (PAP) to AMP but with less efficiency. The sequence is that of Inositol polyphosphate 1-phosphatase from Entamoeba histolytica (strain ATCC 30459 / HM-1:IMSS / ABRM).